A 180-amino-acid polypeptide reads, in one-letter code: Glycoprotein Xg (180 aa).

Residues 1–21 form the signal peptide; it reads MESWWGLPCLAFLCFLMHARG. The Extracellular portion of the chain corresponds to 22–142; the sequence is QRDFDLADAL…GNPEGNMVAK (121 aa). The interval 28 to 133 is disordered; the sequence is ADALDDPEPT…HGGDHHSTYG (106 aa). Over residues 47-57 the composition is skewed to pro residues; that stretch reads KPKPPYYPQPE. A helical membrane pass occupies residues 143-163; that stretch reads IVSPIVSVVVVTLLGAAASYF. The Cytoplasmic portion of the chain corresponds to 164-180; sequence KLNNRRNCFRTHEPENV.

Belongs to the CD99 family. Post-translationally, O-glycosylated. As to expression, expressed in erythroid tissues, including thymus, bone marrow and fetal liver, and in several nonerythroid tissues, such as heart, placenta, skeletal muscle, thyroid and trachea, as well as in skin fibroblasts. Expression is low or undetectable in other tissues.

It localises to the cell membrane. In Homo sapiens (Human), this protein is Glycoprotein Xg (XG).